We begin with the raw amino-acid sequence, 336 residues long: tRNA (guanine(37)-N(1))-methyltransferase Trm5b (336 aa).

S-adenosyl-L-methionine-binding positions include Arg186, 223–224 (DI), 251–252 (DV), and Asn265.

The protein belongs to the class I-like SAM-binding methyltransferase superfamily. TRM5/TYW2 family. As to quaternary structure, monomer.

Its subcellular location is the cytoplasm. The enzyme catalyses guanosine(37) in tRNA + S-adenosyl-L-methionine = N(1)-methylguanosine(37) in tRNA + S-adenosyl-L-homocysteine + H(+). Specifically methylates the N1 position of guanosine-37 in various tRNAs. The chain is tRNA (guanine(37)-N(1))-methyltransferase Trm5b (trm5b) from Methanocaldococcus jannaschii (strain ATCC 43067 / DSM 2661 / JAL-1 / JCM 10045 / NBRC 100440) (Methanococcus jannaschii).